The chain runs to 686 residues: MGCFCAVPEEFYCEVLLLDESKLTLTTQQQGIKKSTKGSVVLDHVFRHINLVEIDYFGLRYCDRSHQTYWLDPAKTLAEHKELINTGPPYTLYFGIKFYAEDPCKLKEEITRYQFFLQVKQDALQGRLPCPVNIAAQMGAYAIQAELGDHDPYKHTAGYVSEYRFVPDQKEELEEAIERIHKTLMGQAPSEAELNYLRTAKSLEMYGVDLHPVYGENKSEYFLGLTPSGVVVYKNKKQVGKYFWPRITKVHFKETQFELRVLGKDCNETSFFFEARSKTACKHLWKCSVEHHTFFRMPDTESNSLSRKLSKFGSISYKHRYSGRTALQMSRDLSIQLPRPNQNVVRSRSKTYPKRVAQTQPTGSNNINRITANTENGENEGTTKIIAPSPVKSFKKAKNENSPDPQRSKSHAPWEENGPQSGLYNSSSDRTKSPKFPCARQRNLSCGSDNDSSQLMRRRKAHNSGEDSDLKQRRRSRSRCNTSSGSESENSNREHRKKRNRTRQENDMVDSGPQWEAVLRRQKEKNQADPNNRRSRHRSRSRSPDIQAKEELWKHIQKELVDPSGLSEEQLKEIPYTKVETQGDPVRIRHSHSPRSYRQYRRSQCSDGERSVLSEVNSKTDLVPPLPVTRSSDAQGSGGSTVHQRRNGSKDSLIEEKSQLSTINPAGKPTAKTIKTIQAARLKAET.

The FERM domain occupies 11-299 (FYCEVLLLDE…EHHTFFRMPD (289 aa)). At Ser304 the chain carries Phosphoserine. Composition is skewed to polar residues over residues 332-346 (DLSI…NVVR) and 357-382 (AQTQ…NEGT). The disordered stretch occupies residues 332 to 669 (DLSIQLPRPN…LSTINPAGKP (338 aa)). Phosphoserine is present on residues Ser389, Ser393, and Ser402. Composition is skewed to polar residues over residues 418–428 (GPQSGLYNSSS) and 442–455 (RNLS…SSQL). The segment covering 479-489 (RCNTSSGSESE) has biased composition (low complexity). Composition is skewed to basic and acidic residues over residues 518-527 (VLRRQKEKNQ) and 547-561 (QAKE…KELV). The span at 588–601 (IRHSHSPRSYRQYR) shows a compositional bias: basic residues. Over residues 648–658 (GSKDSLIEEKS) the composition is skewed to basic and acidic residues.

In terms of tissue distribution, brain, heart, lung, liver and spleen. Not detected in thymus and kidney.

Its subcellular location is the cytoplasm. It localises to the cytoskeleton. The chain is Band 4.1-like protein 4A from Mus musculus (Mouse).